The following is a 277-amino-acid chain: Large ribosomal subunit protein uL2 (277 aa).

The tract at residues 212–277 is disordered; that stretch reads RWRGKRPHVR…KFIVRGRKSK (66 aa). Positions 254–277 are enriched in basic residues; sequence TAGKKTRDKKKASTKFIVRGRKSK.

Belongs to the universal ribosomal protein uL2 family. As to quaternary structure, part of the 50S ribosomal subunit. Forms a bridge to the 30S subunit in the 70S ribosome.

Functionally, one of the primary rRNA binding proteins. Required for association of the 30S and 50S subunits to form the 70S ribosome, for tRNA binding and peptide bond formation. It has been suggested to have peptidyltransferase activity; this is somewhat controversial. Makes several contacts with the 16S rRNA in the 70S ribosome. In Leuconostoc mesenteroides subsp. mesenteroides (strain ATCC 8293 / DSM 20343 / BCRC 11652 / CCM 1803 / JCM 6124 / NCDO 523 / NBRC 100496 / NCIMB 8023 / NCTC 12954 / NRRL B-1118 / 37Y), this protein is Large ribosomal subunit protein uL2.